Consider the following 31-residue polypeptide: Maltose/maltodextrin import ATP-binding protein MalK (31 aa).

Belongs to the ABC transporter superfamily. Maltooligosaccharide importer (TC 3.A.1.1.1) family. The complex is composed of two ATP-binding proteins (MalK), two transmembrane proteins (MalG and MalK) and a solute-binding protein (MalE).

The protein resides in the cell inner membrane. It carries out the reaction D-maltose(out) + ATP + H2O = D-maltose(in) + ADP + phosphate + H(+). In terms of biological role, part of the ABC transporter complex MalEFGK involved in maltose/maltodextrin import. Responsible for energy coupling to the transport system. This Photorhabdus luminescens (Xenorhabdus luminescens) protein is Maltose/maltodextrin import ATP-binding protein MalK.